A 107-amino-acid chain; its full sequence is Iron-binding protein IscA (107 aa).

3 residues coordinate Fe cation: Cys-35, Cys-99, and Cys-101.

Belongs to the HesB/IscA family. Homodimer; may form tetramers and higher multimers. The cofactor is Fe cation.

Functionally, is able to transfer iron-sulfur clusters to apo-ferredoxin. Multiple cycles of [2Fe2S] cluster formation and transfer are observed, suggesting that IscA acts catalytically. Recruits intracellular free iron so as to provide iron for the assembly of transient iron-sulfur cluster in IscU in the presence of IscS, L-cysteine and the thioredoxin reductase system TrxA/TrxB. The chain is Iron-binding protein IscA from Yersinia pestis bv. Antiqua (strain Angola).